A 105-amino-acid chain; its full sequence is ATP-dependent Clp protease adapter protein ClpS (105 aa).

This sequence belongs to the ClpS family. In terms of assembly, binds to the N-terminal domain of the chaperone ClpA.

Its function is as follows. Involved in the modulation of the specificity of the ClpAP-mediated ATP-dependent protein degradation. The polypeptide is ATP-dependent Clp protease adapter protein ClpS (Prochlorococcus marinus (strain MIT 9515)).